A 164-amino-acid polypeptide reads, in one-letter code: UPF0114 protein KPN78578_33570 (164 aa).

Helical transmembrane passes span 15-35 (LLAP…IKFF), 53-73 (MILT…LVMV), 109-126 (VAAS…RVFM), and 136-156 (LMWY…MGYL).

It belongs to the UPF0114 family.

It is found in the cell membrane. The protein is UPF0114 protein KPN78578_33570 of Klebsiella pneumoniae subsp. pneumoniae (strain ATCC 700721 / MGH 78578).